Reading from the N-terminus, the 366-residue chain is Chalcone synthase B (366 aa).

Residue C172 is part of the active site.

This sequence belongs to the thiolase-like superfamily. Chalcone/stilbene synthases family.

The enzyme catalyses (E)-4-coumaroyl-CoA + 3 malonyl-CoA + 3 H(+) = 2',4,4',6'-tetrahydroxychalcone + 3 CO2 + 4 CoA. It participates in secondary metabolite biosynthesis; flavonoid biosynthesis. Its function is as follows. The primary product of this enzyme is 4,2',4',6'-tetrahydroxychalcone (also termed naringenin-chalcone or chalcone) which can under specific conditions spontaneously isomerize into naringenin. The protein is Chalcone synthase B (CHSB) of Ipomoea trifida (Morning glory).